Consider the following 519-residue polypeptide: Cell division cycle protein 20 homolog B (519 aa).

A compositionally biased stretch (polar residues) spans 79–98 (QSQTRALSSDSFGEEQSTTY). The interval 79-133 (QSQTRALSSDSFGEEQSTTYLPEASGSVLKTPPEKETLTLGSRKEQLKTPSKGIS) is disordered. The segment covering 110 to 125 (PPEKETLTLGSRKEQL) has biased composition (basic and acidic residues). WD repeat units follow at residues 229 to 266 (RNDYYLNILDWSFQNLVAIALGSAVYIWNGENHNGIEN), 271 to 310 (LTCNYISSVSWIKEGTCLAVGTSEGEVQLWDVVTKKRLRN), 311 to 341 (MLGHLSVVGALSWNHFILSSGSRLGRVYHHD), 353 to 392 (RHKQAVCALKWSPDGRLLSSGCSDGLLTIWPHDPGASAQG), 399 to 441 (TQST…SIQT), 443 to 484 (STNS…RSGG), and 487 to 519 (GHRGRVLHLSLSPDQTRVFSAAADGTASVWNCY).

This sequence belongs to the WD repeat CDC20/Fizzy family. As to expression, expressed in multiciliated cells (MCCs).

It localises to the cytoplasm. Functionally, protein regulator of centriole-deuterosome disengagement and subsequently participates in the ciliogenesis in multiciliated cells (MCCs). This is Cell division cycle protein 20 homolog B from Homo sapiens (Human).